The following is a 211-amino-acid chain: Ribosomal RNA small subunit methyltransferase G (211 aa).

The S-adenosyl-L-methionine site is built by Gly-73, Phe-78, and Arg-141.

This sequence belongs to the methyltransferase superfamily. RNA methyltransferase RsmG family.

The protein localises to the cytoplasm. The catalysed reaction is guanosine(527) in 16S rRNA + S-adenosyl-L-methionine = N(7)-methylguanosine(527) in 16S rRNA + S-adenosyl-L-homocysteine. In terms of biological role, specifically methylates the N7 position of guanine in position 527 of 16S rRNA. The chain is Ribosomal RNA small subunit methyltransferase G from Jannaschia sp. (strain CCS1).